The primary structure comprises 91 residues: Parbolysin P6 (91 aa).

3 disulfide bridges follow: C16–C37, C22–C33, and C47–C60.

It belongs to the worm cytolysin family. Localized within the skin and proboscis and are most readily isolated from body mucus secretions.

The protein resides in the secreted. Its function is as follows. Cytolysin that shows hemolytic activity (on bovine erythrocytes, HC(50)=5.75 mg/ml). This hemolytic activity is completely inhibited by small unilamelar vesicles composed of PC/PG, PC/PI and PC/PS in 1:1 molar ratios (with at least 100 mg/ml concentration). The polypeptide is Parbolysin P6 (Parborlasia corrugatus (Antarctic nemertean worm)).